The sequence spans 1212 residues: Periplasmic/secreted acid trehalase ATH1 (1212 aa).

Residues 1–82 lie on the Cytoplasmic side of the membrane; sequence MGFKDKILFW…STRVKIRRQN (82 aa). The helical transmembrane segment at 83-103 threads the bilayer; the sequence is ILNTTLILGMLIALVIWTAIL. Residues 104 to 1212 lie on the Periplasmic side of the membrane; sequence STNSYFSSSL…ATIREIVLQE (1109 aa). 7 N-linked (GlcNAc...) asparagine glycosylation sites follow: Asn243, Asn275, Asn296, Asn362, Asn414, Asn428, and Asn521. Residue 546–547 participates in substrate binding; sequence WD. 4 N-linked (GlcNAc...) asparagine glycosylation sites follow: Asn572, Asn601, Asn661, and Asn671. The active-site Proton donor is Glu677. N-linked (GlcNAc...) asparagine glycosylation is found at Asn729 and Asn738. 744–745 is a binding site for substrate; the sequence is KQ. Residues Asn912, Asn938, Asn993, Asn1011, Asn1033, Asn1052, Asn1070, Asn1097, and Asn1165 are each glycosylated (N-linked (GlcNAc...) asparagine).

This sequence belongs to the glycosyl hydrolase 65 family. Homodimer.

It localises to the secreted. Its subcellular location is the periplasm. The protein localises to the membrane. The catalysed reaction is alpha,alpha-trehalose + H2O = alpha-D-glucose + beta-D-glucose. In terms of biological role, periplasmic/secreted acid trehalase that catalyzes hydrolysis of the disaccharide trehalose and required for growth on trehalose as carbon source. Growth on trehalose is not restricted to respiration. The sequence is that of Periplasmic/secreted acid trehalase ATH1 from Candida glabrata (Yeast).